Here is a 266-residue protein sequence, read N- to C-terminus: uncharacterized protein (266 aa).

Helical transmembrane passes span 25–45 (LPSL…GYLL), 64–84 (IGAA…AELI), 111–131 (IVTI…GHLV), 158–178 (VLIS…LSFG), 186–206 (ILGI…HVVA), 209–229 (FVIP…IGNI), and 230–250 (IPAF…IYFI).

It belongs to the FNT transporter (TC 1.A.16) family.

It is found in the cell membrane. This is an uncharacterized protein from Bacillus subtilis (strain 168).